We begin with the raw amino-acid sequence, 248 residues long: Pyridoxine 5'-phosphate synthase (248 aa).

Residue asparagine 12 coordinates 3-amino-2-oxopropyl phosphate. Aspartate 14 to histidine 15 contributes to the 1-deoxy-D-xylulose 5-phosphate binding site. Position 23 (arginine 23) interacts with 3-amino-2-oxopropyl phosphate. Histidine 48 (proton acceptor) is an active-site residue. The 1-deoxy-D-xylulose 5-phosphate site is built by arginine 50 and histidine 55. The Proton acceptor role is filled by glutamate 75. Residue threonine 105 coordinates 1-deoxy-D-xylulose 5-phosphate. The active-site Proton donor is the histidine 196. Residues glycine 197 and glycine 218 to histidine 219 contribute to the 3-amino-2-oxopropyl phosphate site.

It belongs to the PNP synthase family. Homooctamer; tetramer of dimers.

It localises to the cytoplasm. The catalysed reaction is 3-amino-2-oxopropyl phosphate + 1-deoxy-D-xylulose 5-phosphate = pyridoxine 5'-phosphate + phosphate + 2 H2O + H(+). Its pathway is cofactor biosynthesis; pyridoxine 5'-phosphate biosynthesis; pyridoxine 5'-phosphate from D-erythrose 4-phosphate: step 5/5. In terms of biological role, catalyzes the complicated ring closure reaction between the two acyclic compounds 1-deoxy-D-xylulose-5-phosphate (DXP) and 3-amino-2-oxopropyl phosphate (1-amino-acetone-3-phosphate or AAP) to form pyridoxine 5'-phosphate (PNP) and inorganic phosphate. The chain is Pyridoxine 5'-phosphate synthase from Pseudomonas aeruginosa (strain UCBPP-PA14).